The primary structure comprises 372 residues: N-methyl-L-tryptophan oxidase (372 aa).

FAD is bound at residue aspartate 4–histidine 34. Cysteine 307 carries the post-translational modification S-8alpha-FAD cysteine.

This sequence belongs to the MSOX/MTOX family. MTOX subfamily. Monomer. The cofactor is FAD.

The enzyme catalyses N(alpha)-methyl-L-tryptophan + O2 + H2O = L-tryptophan + formaldehyde + H2O2. In terms of biological role, catalyzes the oxidative demethylation of N-methyl-L-tryptophan. The chain is N-methyl-L-tryptophan oxidase from Salmonella dublin (strain CT_02021853).